Consider the following 97-residue polypeptide: Co-chaperonin GroES (97 aa).

The protein belongs to the GroES chaperonin family. In terms of assembly, heptamer of 7 subunits arranged in a ring. Interacts with the chaperonin GroEL.

The protein resides in the cytoplasm. Together with the chaperonin GroEL, plays an essential role in assisting protein folding. The GroEL-GroES system forms a nano-cage that allows encapsulation of the non-native substrate proteins and provides a physical environment optimized to promote and accelerate protein folding. GroES binds to the apical surface of the GroEL ring, thereby capping the opening of the GroEL channel. This chain is Co-chaperonin GroES, found in Salmonella agona (strain SL483).